A 109-amino-acid polypeptide reads, in one-letter code: Parvalbumin beta (109 aa).

A2 bears the N-acetylalanine mark. EF-hand domains are found at residues 39 to 74 and 78 to 109; these read KSAD…FKAG and LSDA…MIKG. Ca(2+) contacts are provided by D52, D54, S56, Y58, E60, E63, D91, D93, D95, K97, and E102.

Belongs to the parvalbumin family. In terms of processing, the N-terminus is blocked.

Functionally, in muscle, parvalbumin is thought to be involved in relaxation after contraction. It binds two calcium ions. This chain is Parvalbumin beta, found in Scomber scombrus (Atlantic mackerel).